A 624-amino-acid chain; its full sequence is (-)-beta-phellandrene synthase 1, chloroplastic (624 aa).

A chloroplast-targeting transit peptide spans 1–48; it reads MAIVSSVPLASKSCLHKSLISSIHKLKPFCRTIPTLGMSRPGKYVMPS. Mg(2+) is bound by residues Asp-375, Asp-379, and Asp-527. The short motif at 375 to 379 is the DDXXD motif element; the sequence is DDMYD.

Belongs to the terpene synthase family. Tpsd subfamily. The cofactor is Mg(2+). Requires Mn(2+) as cofactor.

It localises to the plastid. Its subcellular location is the chloroplast. It catalyses the reaction (2E)-geranyl diphosphate = (-)-beta-phellandrene + diphosphate. It participates in terpene metabolism; oleoresin biosynthesis. Functionally, terpene synthase (TPS) involved in the biosynthesis of monoterpene natural products included in conifer oleoresin secretions and volatile emissions; these compounds contribute to biotic and abiotic stress defense against herbivores and pathogens. Catalyzes the conversion of (2E)-geranyl diphosphate (GPP) to (-)-beta-phellandrene. The polypeptide is (-)-beta-phellandrene synthase 1, chloroplastic (Picea sitchensis (Sitka spruce)).